We begin with the raw amino-acid sequence, 388 residues long: Succinate--CoA ligase [ADP-forming] subunit beta (388 aa).

An ATP-grasp domain is found at 9–244; the sequence is KQLFARYGLP…PSQEDSREAH (236 aa). Residues Lys46, 53 to 55, Glu99, Thr102, and Glu107 each bind ATP; that span reads GRG. Residues Asn199 and Asp213 each contribute to the Mg(2+) site. Substrate is bound by residues Asn264 and 321 to 323; that span reads GIV.

This sequence belongs to the succinate/malate CoA ligase beta subunit family. In terms of assembly, heterotetramer of two alpha and two beta subunits. Mg(2+) serves as cofactor.

The enzyme catalyses succinate + ATP + CoA = succinyl-CoA + ADP + phosphate. The catalysed reaction is GTP + succinate + CoA = succinyl-CoA + GDP + phosphate. It functions in the pathway carbohydrate metabolism; tricarboxylic acid cycle; succinate from succinyl-CoA (ligase route): step 1/1. Its function is as follows. Succinyl-CoA synthetase functions in the citric acid cycle (TCA), coupling the hydrolysis of succinyl-CoA to the synthesis of either ATP or GTP and thus represents the only step of substrate-level phosphorylation in the TCA. The beta subunit provides nucleotide specificity of the enzyme and binds the substrate succinate, while the binding sites for coenzyme A and phosphate are found in the alpha subunit. The polypeptide is Succinate--CoA ligase [ADP-forming] subunit beta (Pectobacterium carotovorum subsp. carotovorum (strain PC1)).